Here is a 94-residue protein sequence, read N- to C-terminus: MLKPLGDRVVIELVESEEKTASGIVLPDSAKEKPQEGKVVAAGSGRVLESGERVALEVKTGDRIIFSKYAGTEVKYEGTDYLILRESDILAVIG.

It belongs to the GroES chaperonin family. As to quaternary structure, heptamer of 7 subunits arranged in a ring. Interacts with the chaperonin GroEL.

Its subcellular location is the cytoplasm. Functionally, together with the chaperonin GroEL, plays an essential role in assisting protein folding. The GroEL-GroES system forms a nano-cage that allows encapsulation of the non-native substrate proteins and provides a physical environment optimized to promote and accelerate protein folding. GroES binds to the apical surface of the GroEL ring, thereby capping the opening of the GroEL channel. The sequence is that of Co-chaperonin GroES from Bacillus licheniformis (strain ATCC 14580 / DSM 13 / JCM 2505 / CCUG 7422 / NBRC 12200 / NCIMB 9375 / NCTC 10341 / NRRL NRS-1264 / Gibson 46).